The primary structure comprises 333 residues: L-lactate dehydrogenase B chain (333 aa).

NAD(+) contacts are provided by residues 29–57 (GQVG…LEDK) and R99. Positions 106, 138, and 169 each coordinate substrate. Residue N138 coordinates NAD(+). Catalysis depends on H193, which acts as the Proton acceptor. T248 provides a ligand contact to substrate.

The protein belongs to the LDH/MDH superfamily. LDH family. As to quaternary structure, homotetramer.

It localises to the cytoplasm. It catalyses the reaction (S)-lactate + NAD(+) = pyruvate + NADH + H(+). Its pathway is fermentation; pyruvate fermentation to lactate; (S)-lactate from pyruvate: step 1/1. Its function is as follows. Interconverts simultaneously and stereospecifically pyruvate and lactate with concomitant interconversion of NADH and NAD(+). The protein is L-lactate dehydrogenase B chain (LDHB) of Sceloporus woodi (Florida scrub lizard).